The chain runs to 1146 residues: Integrin alpha-PS1 (1146 aa).

The first 30 residues, 1-30, serve as a signal peptide directing secretion; sequence MLELPFTTIRPNCRLRQNLGILIILQCVLT. Topologically, residues 31–1085 are extracellular; sequence CYNFNLEQRL…NQQRDTSIPW (1055 aa). FG-GAP repeat units follow at residues 38 to 105, 121 to 186, 193 to 245, 254 to 303, 304 to 366, 367 to 422, and 432 to 494; these read QRLP…FDDC, LSPP…FEEV, RPVQ…YLQR, HSDL…KSTD, NPIP…TLPM, KYTL…GLNS, and ELGG…RKEL. Residues asparagine 68, asparagine 86, and asparagine 147 are each glycosylated (N-linked (GlcNAc...) asparagine). N-linked (GlcNAc...) asparagine glycosylation is found at asparagine 470, asparagine 511, asparagine 657, asparagine 680, asparagine 711, asparagine 718, asparagine 761, and asparagine 928. A disordered region spans residues 938-958; it reads YYSSSHRDDHSDDTQSNRNRV. Over residues 942 to 952 the composition is skewed to basic and acidic residues; sequence SHRDDHSDDTQ. Residue asparagine 1027 is glycosylated (N-linked (GlcNAc...) asparagine). Residues 1086-1106 traverse the membrane as a helical segment; sequence LIIILGIVGGLLLLALVTYVL. Residues 1107 to 1146 are Cytoplasmic-facing; sequence WKVGFFKRIRPTDPTLSGNLEKMNEEKPFLAPSKNTHHVF.

This sequence belongs to the integrin alpha chain family. In terms of assembly, heterodimer of an alpha and a beta subunit. The alpha subunit is composed of a heavy and a light chain linked by a disulfide bond. Alpha-PS1 associates with beta-PS. Expressed in follicle cells (at protein level). At syncytial blastoderm stage, expressed in the ectoderm but not in the mesodermal precursors. At embryonic stage 7, expressed in dorsal and ventrolateral ectoderm and in some yolk nuclei. At late stage 10, expression is homogeneous in the ectoderm and is particularly abundant in the anterior and posterior midgut primordia. At stage 11, strongly expressed in a metameric pattern in the ectoderm, in the proctodeum and in the posterior midgut primordium. At stage 12, accumulates at the segment boundaries that start to become morphologically visible, similar expression pattern is observed in the central nervous system. In third larval instar wing imaginal disk, strongly expressed in the dorsal compartment, in the adepithelial cells and in patches on the peripodial membrane covering the imaginal disk to the outside.

Its subcellular location is the apical cell membrane. It localises to the lateral cell membrane. The protein localises to the basal cell membrane. In terms of biological role, integrin alpha-PS1/beta-PS is a receptor for laminin. In Drosophila melanogaster (Fruit fly), this protein is Integrin alpha-PS1 (mew).